The primary structure comprises 345 residues: Hydroxymethylglutaryl-CoA synthase (345 aa).

Position 28 (D28) interacts with (3S)-3-hydroxy-3-methylglutaryl-CoA. The Proton donor/acceptor role is filled by E80. Residues C112 and T153 each coordinate (3S)-3-hydroxy-3-methylglutaryl-CoA. C112 acts as the Acyl-thioester intermediate in catalysis. A CoA-binding site is contributed by R199. 2 residues coordinate (3S)-3-hydroxy-3-methylglutaryl-CoA: T201 and H234. Catalysis depends on H234, which acts as the Proton donor/acceptor. CoA is bound at residue K239. The (3S)-3-hydroxy-3-methylglutaryl-CoA site is built by R243, N266, and S296.

Belongs to the thiolase-like superfamily. Archaeal HMG-CoA synthase family. In terms of assembly, interacts with acetoacetyl-CoA thiolase that catalyzes the precedent step in the pathway and with a DUF35 protein. The acetoacetyl-CoA thiolase/HMG-CoA synthase complex channels the intermediate via a fused CoA-binding site, which allows for efficient coupling of the endergonic thiolase reaction with the exergonic HMGCS reaction.

It carries out the reaction acetoacetyl-CoA + acetyl-CoA + H2O = (3S)-3-hydroxy-3-methylglutaryl-CoA + CoA + H(+). It participates in metabolic intermediate biosynthesis; (R)-mevalonate biosynthesis; (R)-mevalonate from acetyl-CoA: step 2/3. Functionally, catalyzes the condensation of acetyl-CoA with acetoacetyl-CoA to form 3-hydroxy-3-methylglutaryl-CoA (HMG-CoA). Functions in the mevalonate (MVA) pathway leading to isopentenyl diphosphate (IPP), a key precursor for the biosynthesis of isoprenoid compounds that are building blocks of archaeal membrane lipids. This Methanobrevibacter smithii (strain ATCC 35061 / DSM 861 / OCM 144 / PS) protein is Hydroxymethylglutaryl-CoA synthase.